The primary structure comprises 166 residues: NAD(P)H-quinone oxidoreductase subunit I, chloroplastic (166 aa).

4Fe-4S ferredoxin-type domains are found at residues 55 to 84 (GRIHFEFDKCIACEVCVRVCPIDLPVVDWK) and 95 to 124 (LNYSIDFGICIFCGNCVEYCPTNCLSMTEE). [4Fe-4S] cluster contacts are provided by Cys-64, Cys-67, Cys-70, Cys-74, Cys-104, Cys-107, Cys-110, and Cys-114.

It belongs to the complex I 23 kDa subunit family. As to quaternary structure, NDH is composed of at least 16 different subunits, 5 of which are encoded in the nucleus. [4Fe-4S] cluster serves as cofactor.

The protein localises to the plastid. It is found in the chloroplast thylakoid membrane. It carries out the reaction a plastoquinone + NADH + (n+1) H(+)(in) = a plastoquinol + NAD(+) + n H(+)(out). The catalysed reaction is a plastoquinone + NADPH + (n+1) H(+)(in) = a plastoquinol + NADP(+) + n H(+)(out). In terms of biological role, NDH shuttles electrons from NAD(P)H:plastoquinone, via FMN and iron-sulfur (Fe-S) centers, to quinones in the photosynthetic chain and possibly in a chloroplast respiratory chain. The immediate electron acceptor for the enzyme in this species is believed to be plastoquinone. Couples the redox reaction to proton translocation, and thus conserves the redox energy in a proton gradient. In Lasianthaea macrocephala (Lipochaeta macrocephala), this protein is NAD(P)H-quinone oxidoreductase subunit I, chloroplastic.